Reading from the N-terminus, the 174-residue chain is MLNWIDTAPRRILALISAACVAMLAFGMYLQHVVGLEPCPMCIVQRYALIGVAVFAGLASARGQKGWWMTWSVLALVAAGFGAFVAARQSWLQWYPPEIATCGRDFYGMIENYPISRAIPMIFRGSGDCTAVDWTFLGGSIANWSFVWFLLFAVLLLVLLVRGGRGAPDTLARA.

At 1–12 the chain is on the cytoplasmic side; sequence MLNWIDTAPRRI. A helical membrane pass occupies residues 13–29; sequence LALISAACVAMLAFGMY. Topologically, residues 30-47 are periplasmic; that stretch reads LQHVVGLEPCPMCIVQRY. A disulfide bridge connects residues Cys39 and Cys42. Residues 48 to 64 traverse the membrane as a helical segment; the sequence is ALIGVAVFAGLASARGQ. The Cytoplasmic segment spans residues 65–69; it reads KGWWM. The chain crosses the membrane as a helical span at residues 70–87; it reads TWSVLALVAAGFGAFVAA. At 88–143 the chain is on the periplasmic side; sequence RQSWLQWYPPEIATCGRDFYGMIENYPISRAIPMIFRGSGDCTAVDWTFLGGSIAN. Cys102 and Cys129 form a disulfide bridge. A helical membrane pass occupies residues 144–162; it reads WSFVWFLLFAVLLLVLLVR. Over 163-174 the chain is Cytoplasmic; the sequence is GGRGAPDTLARA.

The protein belongs to the DsbB family.

It is found in the cell inner membrane. Required for disulfide bond formation in some periplasmic proteins. Acts by oxidizing the DsbA protein. The chain is Disulfide bond formation protein B from Acidovorax sp. (strain JS42).